The following is a 396-amino-acid chain: Acetate kinase (396 aa).

Mg(2+) is bound at residue asparagine 8. Residue lysine 15 coordinates ATP. Arginine 89 provides a ligand contact to substrate. The active-site Proton donor/acceptor is aspartate 146. ATP contacts are provided by residues 206-210 (HIGNG), 283-285 (DMR), and 331-335 (GVGEN). Glutamate 383 contacts Mg(2+).

It belongs to the acetokinase family. As to quaternary structure, homodimer. It depends on Mg(2+) as a cofactor. The cofactor is Mn(2+).

It is found in the cytoplasm. The enzyme catalyses acetate + ATP = acetyl phosphate + ADP. It participates in metabolic intermediate biosynthesis; acetyl-CoA biosynthesis; acetyl-CoA from acetate: step 1/2. Its function is as follows. Catalyzes the formation of acetyl phosphate from acetate and ATP. Can also catalyze the reverse reaction. This Streptococcus pneumoniae (strain Hungary19A-6) protein is Acetate kinase.